Here is a 189-residue protein sequence, read N- to C-terminus: Batroxicidin (189 aa).

The signal sequence occupies residues 1-22 (MQGFFWKTWLVVALCGTSSSLA). Residues 23 to 155 (HRPLSYGEAL…DEEKDRPKRV (133 aa)) constitute a propeptide that is removed on maturation. Cystine bridges form between Cys79–Cys90 and Cys101–Cys118. A compositionally biased stretch (acidic residues) spans 125 to 148 (EEEEEDEEEQKAEVEKDEEKEDEE). The segment at 125 to 152 (EEEEEDEEEQKAEVEKDEEKEDEEKDRP) is disordered.

Belongs to the cathelicidin family. Expressed by the venom gland.

Its subcellular location is the secreted. The protein resides in the target cell membrane. Functionally, potent antimicrobial peptide against Gram-negative (MIC=0.25 ug/ml against E.coli ATCC 25922, MIC=1 ug/ml against P.aeruginosa) and Gram-positive bacteria (MIC=32 ug/ml against E.faecalis, MIC=32 ug/ml against S.aureus). Adopts an amphipathic alpha helical conformation, that may allow to partition into the target membrane. Low hemolytic activities have been observed on mammalian cells. In addition, when tested in vitro on the parasite Trypanosoma cruzi (responsible of the Chagas disease), is able to reduce the number of the three forms (epimastigote, trypomastigote and amastigote) by inducing cell death through necrosis. The polypeptide is Batroxicidin (Bothrops atrox (Barba amarilla)).